Consider the following 165-residue polypeptide: Urease accessory protein UreE (165 aa).

Residues glutamate 137–histidine 156 form a disordered region.

It belongs to the UreE family.

The protein resides in the cytoplasm. Involved in urease metallocenter assembly. Binds nickel. Probably functions as a nickel donor during metallocenter assembly. The polypeptide is Urease accessory protein UreE (Pseudomonas putida (strain GB-1)).